Reading from the N-terminus, the 310-residue chain is MKVSIYGAGRVGVSIAFSLLHTSLVDEMVLIDIDKKRAEGEALDLLHSSSMFKSCNIWAGDSKDIEDSDFIVITAGRSQRPGETRLELLGDNVRIMKEISEDIVKYSPNSIIINVTNPVDVLTYFIWQFTNLPSQRVIGTGTTLDTARLRVLLSQQCGISPASIHAYVIGEHGDSEFVPFSNATIGGLKLIDYCKLCENNSEQGFCLNLKIIEEKVRKAAYEIIERKGATNLAIGAVTARLISSMWRNEKRVWTISVLVDGIYIGYPSVIGKSGVEKVLRLNLSEDEEKKFQYSRSVIQKSIEEIKSKIF.

Positions 11, 32, and 37 each coordinate NAD(+). Substrate contacts are provided by residues glutamine 79, arginine 85, and 117 to 120; that span reads NPVD. NAD(+) is bound by residues 115 to 117 and threonine 140; that span reads VTN. Substrate is bound at residue 145–148; the sequence is DTAR. The beta-D-fructose 1,6-bisphosphate site is built by arginine 150 and histidine 165. The active-site Proton acceptor is the histidine 172. Residue tyrosine 221 is modified to Phosphotyrosine. Threonine 230 serves as a coordination point for substrate.

This sequence belongs to the LDH/MDH superfamily. LDH family. Homotetramer.

The protein resides in the cytoplasm. It catalyses the reaction (S)-lactate + NAD(+) = pyruvate + NADH + H(+). The protein operates within fermentation; pyruvate fermentation to lactate; (S)-lactate from pyruvate: step 1/1. Allosterically activated by fructose 1,6-bisphosphate (FBP). In terms of biological role, catalyzes the conversion of lactate to pyruvate. The sequence is that of L-lactate dehydrogenase from Fervidobacterium nodosum (strain ATCC 35602 / DSM 5306 / Rt17-B1).